The following is a 455-amino-acid chain: Argininosuccinate lyase (455 aa).

It belongs to the lyase 1 family. Argininosuccinate lyase subfamily.

It is found in the cytoplasm. It catalyses the reaction 2-(N(omega)-L-arginino)succinate = fumarate + L-arginine. Its pathway is amino-acid biosynthesis; L-arginine biosynthesis; L-arginine from L-ornithine and carbamoyl phosphate: step 3/3. The protein is Argininosuccinate lyase of Shewanella baltica (strain OS223).